Consider the following 433-residue polypeptide: Alpha-(1,3)-fucosyltransferase fut-1 (433 aa).

Residues 1–12 lie on the Cytoplasmic side of the membrane; it reads MTARSIKLFFAR. Residues 13–32 form a helical; Signal-anchor for type II membrane protein membrane-spanning segment; that stretch reads WKYLMFACCITYLLVIYAPI. Topologically, residues 33–433 are lumenal; it reads SKSEQKDWKE…GTLVDSIPLD (401 aa). N-linked (GlcNAc...) asparagine glycosylation is found at N194 and N359.

It belongs to the glycosyltransferase 10 family. Requires Mg(2+) as cofactor. Mn(2+) is required as a cofactor. N-glycosylated. Glycosylation is important for enzymatic activity. As to expression, expressed in the pharyngeal-intestinal (PI) and anal valves. Expressed in ASG neurons and in one or two neurons in the retrovesicular ganglion and two neurons posterior to the PI valve and PHA and PHB neurons in the tail.

It localises to the golgi apparatus. It is found in the golgi stack membrane. It carries out the reaction N(4)-{beta-D-GlcNAc-(1-&gt;2)-alpha-D-Man-(1-&gt;3)-[beta-D-GlcNAc-(1-&gt;2)-alpha-D-Man-(1-&gt;6)]-beta-D-Man-(1-&gt;4)-beta-D-GlcNAc-(1-&gt;4)-beta-D-GlcNAc}-L-asparaginyl-[protein] + GDP-beta-L-fucose = N(4)-{beta-D-GlcNAc-(1-&gt;2)-alpha-D-Man-(1-&gt;3)-[beta-D-GlcNAc-(1-&gt;2)-alpha-D-Man-(1-&gt;6)]-beta-D-Man-(1-&gt;4)-beta-D-GlcNAc-(1-&gt;4)-[alpha-L-Fuc(1-&gt;3)]-beta-D-GlcNAc}-L-asparaginyl-[protein] + GDP + H(+). Its pathway is protein modification; protein glycosylation. Its activity is regulated as follows. Inhibited by Cu(2+) or Zn(2+) and to a lesser extent Ni(2+) ions. Its function is as follows. Preferentially catalyzes the addition of fucose in alpha 1-3 linkage to the first GlcNAc residue (with or without alpha 1,6-linked fucose), next to the peptide chains in N-glycans. Unlike in mammals, does not require the prior action of N-acetylglucosaminyltransferase I to generate complex N-glycans. The sequence is that of Alpha-(1,3)-fucosyltransferase fut-1 from Caenorhabditis elegans.